We begin with the raw amino-acid sequence, 160 residues long: MGVTKKPDLNDPVSRAKLAKGMGHNYYGEPAWPNDLLYIFPIVILGTIACIAGLAVLEPSMIGEPANPFATPLEILPEWYFYPVFQILRTVPNKLLGVLLMASVPAGLLTVPFLENVNKFQNPFRRPVATTVFLIGTVVAIWLGIGAALPIDRSLTLGLF.

The next 3 membrane-spanning stretches (helical) occupy residues 36–56 (LLYIFPIVILGTIACIAGLAV), 95–115 (LLGVLLMASVPAGLLTVPFLE), and 131–151 (TVFLIGTVVAIWLGIGAALPI).

Belongs to the cytochrome b family. PetD subfamily. The 4 large subunits of the cytochrome b6-f complex are cytochrome b6, subunit IV (17 kDa polypeptide, petD), cytochrome f and the Rieske protein, while the 4 small subunits are petG, petL, petM and petN. The complex functions as a dimer.

The protein resides in the plastid. It is found in the chloroplast thylakoid membrane. Component of the cytochrome b6-f complex, which mediates electron transfer between photosystem II (PSII) and photosystem I (PSI), cyclic electron flow around PSI, and state transitions. This is Cytochrome b6-f complex subunit 4 from Psilotum nudum (Whisk fern).